We begin with the raw amino-acid sequence, 33 residues long: uncharacterized protein (33 aa).

Over methionine 1–lysine 12 the chain is Cytoplasmic. Residues leucine 13–tyrosine 33 form a helical membrane-spanning segment.

It is found in the cell inner membrane. This is an uncharacterized protein from Escherichia coli (strain K12).